Reading from the N-terminus, the 264-residue chain is Apolipoprotein A-I (264 aa).

The signal sequence occupies residues 1 to 18 (MRGVLVTLAVLFLTGTQA). 2 tandem repeats follow at residues 67–88 (LKLA…EDMA) and 89–110 (PYYK…AELT). The tract at residues 67-264 (LKLADNLDTL…FLDELQKSVA (198 aa)) is 10 X approximate tandem repeats. Residues 111–121 (KDLEEVKEKIR) form a 3; half-length repeat. 5 consecutive repeat copies span residues 122-143 (PFLD…QRLT), 144-165 (PVAQ…AKLT), 166-187 (PVAE…KNLA), 188-209 (PYSD…EKGI), and 210-231 (PQAS…EKMT). The stretch at 232-242 (PLVQEFRERLT) is one 9; half-length repeat. Residues 243-264 (PYAENLKNRLISFLDELQKSVA) form repeat 10.

The protein belongs to the apolipoprotein A1/A4/E family. Homodimer. Major protein of plasma HDL, also found in chylomicrons.

The protein localises to the secreted. In terms of biological role, participates in the reverse transport of cholesterol from tissues to the liver for excretion by promoting cholesterol efflux from tissues and by acting as a cofactor for the lecithin cholesterol acyltransferase (LCAT). In Gallus gallus (Chicken), this protein is Apolipoprotein A-I (APOA1).